Reading from the N-terminus, the 272-residue chain is Tropinone reductase-like 1 (272 aa).

17 to 41 (IITGGASGIGACTAELFHENGAKVV) is an NAD(+) binding site. Ser-150 is a substrate binding site. Tyr-163 acts as the Proton acceptor in catalysis.

The protein belongs to the short-chain dehydrogenases/reductases (SDR) family.

In terms of biological role, has no tropinone reductase activity. This Erythroxylum coca (Coca plant) protein is Tropinone reductase-like 1.